The primary structure comprises 311 residues: MTKPAVQKSGLHPRNRHRDRYDFPALKQSYPALIPFVKVNAYGDESVDFANPEAVKTLNQALLQHFYQIEHWTIPDGFLCPPIPGRADYVHHLADLLAEDNRSVVPRDASVLDVGCGANCVYPLIGHREYGWRFTGSEVNPLAMKAANETIEANSGLNRSIRLRRQKNSKAILAGIIHKNDSFDAVMCNPPFHASAEDAREGSQRKLHNLGLDKRSPLNFGGQQDELWCEGGELAFIGQMIKDSVSFGRQCLWFTSLVSRKEHLPEIYRALEAVDAEKVRTIDMAQGQKQSRFVAWSFLDTAARARWLQKR.

Belongs to the methyltransferase superfamily. METTL16/RlmF family.

The protein resides in the cytoplasm. It catalyses the reaction adenosine(1618) in 23S rRNA + S-adenosyl-L-methionine = N(6)-methyladenosine(1618) in 23S rRNA + S-adenosyl-L-homocysteine + H(+). Its function is as follows. Specifically methylates the adenine in position 1618 of 23S rRNA. This Pectobacterium atrosepticum (strain SCRI 1043 / ATCC BAA-672) (Erwinia carotovora subsp. atroseptica) protein is Ribosomal RNA large subunit methyltransferase F.